We begin with the raw amino-acid sequence, 161 residues long: Transcriptional repressor NrdR (161 aa).

Residues 3-34 (CPSCQHTDSRVLESRAADSGKSVRRRRECLNC) fold into a zinc finger. Residues 49–139 (ITVVKRSGTR…VYGKFSGISD (91 aa)) enclose the ATP-cone domain.

It belongs to the NrdR family. It depends on Zn(2+) as a cofactor.

Negatively regulates transcription of bacterial ribonucleotide reductase nrd genes and operons by binding to NrdR-boxes. This Synechococcus sp. (strain RCC307) protein is Transcriptional repressor NrdR.